The sequence spans 84 residues: Small ribosomal subunit protein bS20 (84 aa).

It belongs to the bacterial ribosomal protein bS20 family.

Binds directly to 16S ribosomal RNA. The protein is Small ribosomal subunit protein bS20 of Lactiplantibacillus plantarum (strain ATCC BAA-793 / NCIMB 8826 / WCFS1) (Lactobacillus plantarum).